A 106-amino-acid polypeptide reads, in one-letter code: ATP-dependent Clp protease adapter protein ClpS (106 aa).

It belongs to the ClpS family. Binds to the N-terminal domain of the chaperone ClpA.

Its function is as follows. Involved in the modulation of the specificity of the ClpAP-mediated ATP-dependent protein degradation. This chain is ATP-dependent Clp protease adapter protein ClpS, found in Cronobacter sakazakii (strain ATCC BAA-894) (Enterobacter sakazakii).